Consider the following 882-residue polypeptide: MPEIAQPTPMMRQYLETKARYPDALLFFRLGDFYELFFEDALTASEALQITLTARAKGDDKVPMCGVPHHAARGYVARLLEKGFKVAICDQVEEPGKSAIVKREVTRVVTPGMVFDDQVLDPREASYLGVVALAEGRAGLALLDASTGQLQCGEVPDDARAVDELRRAGVRELVLPLGADAARAERIERAVGVPAARRPAADYERADDRLRRHLGVASLDGFGVGGEPLGLAAAAAALAYLADTQRATPRHVDRVSRLRTEDVLLLDEATRTNLELERTLNGGRKKGSLLALLDRSVTAPGGRRLAEWLRYPLTELAPIHARLDAVEELAGASVAREDLAAALRPVADAERLLSRLVLGQGNARDLRALAGALLALPALAELLGGRAAALLRDAGEGTRGLEELAAHLDRAVAEEPPATLREGGIIRRGFSPELDEIVAVAEDGKGFIARLEAREKERTGIGSLKVRFNKVFGYYLEVTKANLHAVPSDYERRQTTVGGERFVTPELKRFEETVLTAEERRIAVEGRLFEELRQRVAEAAPRIRTAADAVATADALLALARVAAERGYCRPEVDGSEVLEIVDGRHPVVEAVLPEGPAGFVPNDVLVASRGALECERLGALHVITGPNMAGKSTVMRQAALVTLLAQMGAFVPARKARVGIVDRIFTRVGASDDLARGRSTFMVEMTETAAILHNATRRSLVVLDEIGRGTSTFDGVSIAWAVAEHLHDQVGCRTLFATHYHELQDLARERPAVRNLTVAVREVGDRVVFLRKLVQGGASRSYGIEVAKLAGLPAEVLARAREILKNLEALEVDEGGHAALARGRKTRRADPQSQLGLFAPAPAPADPALEEIASALRATEIDALRPLDALNLLAAWRAKLR.

Residue 626–633 (GPNMAGKS) coordinates ATP.

This sequence belongs to the DNA mismatch repair MutS family.

Its function is as follows. This protein is involved in the repair of mismatches in DNA. It is possible that it carries out the mismatch recognition step. This protein has a weak ATPase activity. This Anaeromyxobacter sp. (strain Fw109-5) protein is DNA mismatch repair protein MutS.